A 151-amino-acid chain; its full sequence is Secreted RxLR effector protein 30 (151 aa).

Positions 1-19 are cleaved as a signal peptide; it reads MRSSTILIVLGIAILAVNG. Residues 38 to 53 carry the RxLR-dEER motif; the sequence is RLLRSTSTEHETDEER.

The protein belongs to the RxLR effector family.

Its subcellular location is the secreted. It localises to the host nucleus. Functionally, effector that acts as a broad suppressor of cell death to interrupt plant immunity. Inhibits cell death induced by cell death-inducing proteins, including the PAMP elicitor INF1 from P.infestans. This is Secreted RxLR effector protein 30 from Plasmopara viticola (Downy mildew of grapevine).